The primary structure comprises 61 residues: Small ribosomal subunit protein uS14 (61 aa).

Zn(2+)-binding residues include Cys-24, Cys-27, Cys-40, and Cys-43.

Belongs to the universal ribosomal protein uS14 family. Zinc-binding uS14 subfamily. In terms of assembly, part of the 30S ribosomal subunit. Contacts proteins S3 and S10. Requires Zn(2+) as cofactor.

In terms of biological role, binds 16S rRNA, required for the assembly of 30S particles and may also be responsible for determining the conformation of the 16S rRNA at the A site. This Geotalea uraniireducens (strain Rf4) (Geobacter uraniireducens) protein is Small ribosomal subunit protein uS14.